Here is a 458-residue protein sequence, read N- to C-terminus: Elongation factor 1-alpha (458 aa).

At glycine 2 the chain carries N,N,N-trimethylglycine. Position 3 is an N6,N6-dimethyllysine; alternate (lysine 3). Lysine 3 carries the N6-methyllysine; alternate modification. In terms of domain architecture, tr-type G spans lysine 5–serine 240. Positions glycine 14–serine 21 are G1. Position 14–21 (glycine 14–serine 21) interacts with GTP. The residue at position 30 (lysine 30) is an N6-methyllysine. The G2 stretch occupies residues glycine 70–aspartate 74. Residue lysine 79 is modified to N6,N6,N6-trimethyllysine. Residues aspartate 91–glycine 94 are G3. GTP contacts are provided by residues aspartate 91 to histidine 95 and asparagine 153 to aspartate 156. Residues asparagine 153 to aspartate 156 form a G4 region. A G5 region spans residues serine 192 to tryptophan 194. Lysine 316 carries the N6,N6-dimethyllysine; alternate modification. An N6-methyllysine; alternate modification is found at lysine 316. The residue at position 390 (lysine 390) is an N6-methyllysine.

The protein belongs to the TRAFAC class translation factor GTPase superfamily. Classic translation factor GTPase family. EF-Tu/EF-1A subfamily.

It localises to the cytoplasm. This protein promotes the GTP-dependent binding of aminoacyl-tRNA to the A-site of ribosomes during protein biosynthesis. The chain is Elongation factor 1-alpha (TEF-1) from Absidia glauca (Pin mould).